The primary structure comprises 134 residues: Interleukin-5 (134 aa).

Residues 1–19 (MRMLLHLSLLALGASYMYA) form the signal peptide. An O-linked (GalNAc...) threonine glycan is attached at Thr-22. N-linked (GlcNAc...) asparagine glycans are attached at residues Asn-47 and Asn-90.

This sequence belongs to the IL-5 family. As to quaternary structure, homodimer; disulfide-linked. Interacts with IL5RA. Interacts with CSF2RB.

It localises to the secreted. In terms of biological role, homodimeric cytokine expressed predominantly by T-lymphocytes and NK cells that plays an important role in the survival, differentiation, and chemotaxis of eosinophils. Also acts on activated and resting B-cells to induce immunoglobulin production, growth, and differentiation. Mechanistically, exerts its biological effects through a receptor composed of IL5RA subunit and the cytokine receptor common subunit beta/CSF2RB. Binding to the receptor leads to activation of various kinases including LYN, SYK and JAK2 and thereby propagates signals through the RAS-MAPK and JAK-STAT5 pathways respectively. The polypeptide is Interleukin-5 (IL5) (Cercocebus atys (Sooty mangabey)).